The chain runs to 175 residues: Crossover junction endodeoxyribonuclease RuvC (175 aa).

Active-site residues include Asp-8, Glu-67, and Asp-139. Positions 8, 67, and 139 each coordinate Mg(2+).

Belongs to the RuvC family. As to quaternary structure, homodimer which binds Holliday junction (HJ) DNA. The HJ becomes 2-fold symmetrical on binding to RuvC with unstacked arms; it has a different conformation from HJ DNA in complex with RuvA. In the full resolvosome a probable DNA-RuvA(4)-RuvB(12)-RuvC(2) complex forms which resolves the HJ. Requires Mg(2+) as cofactor.

The protein localises to the cytoplasm. It carries out the reaction Endonucleolytic cleavage at a junction such as a reciprocal single-stranded crossover between two homologous DNA duplexes (Holliday junction).. Its function is as follows. The RuvA-RuvB-RuvC complex processes Holliday junction (HJ) DNA during genetic recombination and DNA repair. Endonuclease that resolves HJ intermediates. Cleaves cruciform DNA by making single-stranded nicks across the HJ at symmetrical positions within the homologous arms, yielding a 5'-phosphate and a 3'-hydroxyl group; requires a central core of homology in the junction. The consensus cleavage sequence is 5'-(A/T)TT(C/G)-3'. Cleavage occurs on the 3'-side of the TT dinucleotide at the point of strand exchange. HJ branch migration catalyzed by RuvA-RuvB allows RuvC to scan DNA until it finds its consensus sequence, where it cleaves and resolves the cruciform DNA. This is Crossover junction endodeoxyribonuclease RuvC from Marinobacter nauticus (strain ATCC 700491 / DSM 11845 / VT8) (Marinobacter aquaeolei).